A 187-amino-acid chain; its full sequence is Cell division protein SepF (187 aa).

The tract at residues 13-74 (GLAEDDRYAE…PAPATTAQVT (62 aa)) is disordered. Residues 16 to 65 (EDDRYAEDTEPETTRPRVEAAREVRVESRHEARPEVRHEPRPEVSVERRP) show a composition bias toward basic and acidic residues.

It belongs to the SepF family. Homodimer. Interacts with FtsZ.

It is found in the cytoplasm. Functionally, cell division protein that is part of the divisome complex and is recruited early to the Z-ring. Probably stimulates Z-ring formation, perhaps through the cross-linking of FtsZ protofilaments. Its function overlaps with FtsA. The chain is Cell division protein SepF from Kineococcus radiotolerans (strain ATCC BAA-149 / DSM 14245 / SRS30216).